The sequence spans 979 residues: Translation initiation factor IF-2 (979 aa).

Positions 68-392 (VKQKQGTPAS…SRAAQDAMEL (325 aa)) are disordered. Composition is skewed to basic and acidic residues over residues 102 to 179 (QDMR…KPEE), 217 to 229 (EMEK…EVFR), and 260 to 273 (TKED…DADG). Polar residues predominate over residues 309–326 (PSGNKNNNRPAQQQSNAS). Basic and acidic residues predominate over residues 347–356 (DVQRQVKETL). Positions 478-646 (ARPPIVTVMG…KVLLEADILE (169 aa)) constitute a tr-type G domain. Positions 487–494 (GHVDHGKT) are G1. 487–494 (GHVDHGKT) is a GTP binding site. Positions 512 to 516 (GITQH) are G2. The G3 stretch occupies residues 534-537 (DTPG). GTP is bound by residues 534–538 (DTPGH) and 588–591 (NKID). Residues 588 to 591 (NKID) form a G4 region. The tract at residues 624 to 626 (SAK) is G5.

Belongs to the TRAFAC class translation factor GTPase superfamily. Classic translation factor GTPase family. IF-2 subfamily.

The protein localises to the cytoplasm. Its function is as follows. One of the essential components for the initiation of protein synthesis. Protects formylmethionyl-tRNA from spontaneous hydrolysis and promotes its binding to the 30S ribosomal subunits. Also involved in the hydrolysis of GTP during the formation of the 70S ribosomal complex. This Porphyromonas gingivalis (strain ATCC 33277 / DSM 20709 / CIP 103683 / JCM 12257 / NCTC 11834 / 2561) protein is Translation initiation factor IF-2.